A 301-amino-acid chain; its full sequence is Thymidylate synthase (301 aa).

DUMP-binding positions include Arg38 and 163 to 164 (RR). The Nucleophile role is filled by Cys183. DUMP is bound by residues 203-206 (RSGD), Asn214, and 244-246 (HIY). (6R)-5,10-methylene-5,6,7,8-tetrahydrofolate is bound at residue Asp206. A (6R)-5,10-methylene-5,6,7,8-tetrahydrofolate-binding site is contributed by Ala300.

It belongs to the thymidylate synthase family. Homodimer.

It carries out the reaction dUMP + (6R)-5,10-methylene-5,6,7,8-tetrahydrofolate = 7,8-dihydrofolate + dTMP. It participates in pyrimidine metabolism; dTTP biosynthesis. Catalyzes the reductive methylation of deoxyuridylate to thymidylate. This chain is Thymidylate synthase, found in Varicella-zoster virus (strain Dumas) (HHV-3).